The chain runs to 445 residues: Tubulin beta-1 chain (445 aa).

Residues glutamine 11, glutamate 69, serine 138, glycine 142, threonine 143, glycine 144, asparagine 204, and asparagine 226 each coordinate GTP. Glutamate 69 serves as a coordination point for Mg(2+). The segment at 426–445 (QDATAEDEEEYEDEEEEMAA) is disordered. Residues 429–445 (TAEDEEEYEDEEEEMAA) show a composition bias toward acidic residues.

The protein belongs to the tubulin family. In terms of assembly, dimer of alpha and beta chains. A typical microtubule is a hollow water-filled tube with an outer diameter of 25 nm and an inner diameter of 15 nM. Alpha-beta heterodimers associate head-to-tail to form protofilaments running lengthwise along the microtubule wall with the beta-tubulin subunit facing the microtubule plus end conferring a structural polarity. Microtubules usually have 13 protofilaments but different protofilament numbers can be found in some organisms and specialized cells. Mg(2+) serves as cofactor.

It is found in the cytoplasm. It localises to the cytoskeleton. Its function is as follows. Tubulin is the major constituent of microtubules, a cylinder consisting of laterally associated linear protofilaments composed of alpha- and beta-tubulin heterodimers. Microtubules grow by the addition of GTP-tubulin dimers to the microtubule end, where a stabilizing cap forms. Below the cap, tubulin dimers are in GDP-bound state, owing to GTPase activity of alpha-tubulin. This chain is Tubulin beta-1 chain (TUBB1), found in Eleusine indica (Goosegrass).